A 248-amino-acid chain; its full sequence is Segregation and condensation protein A (248 aa).

Belongs to the ScpA family. As to quaternary structure, component of a cohesin-like complex composed of ScpA, ScpB and the Smc homodimer, in which ScpA and ScpB bind to the head domain of Smc. The presence of the three proteins is required for the association of the complex with DNA.

The protein localises to the cytoplasm. In terms of biological role, participates in chromosomal partition during cell division. May act via the formation of a condensin-like complex containing Smc and ScpB that pull DNA away from mid-cell into both cell halves. The sequence is that of Segregation and condensation protein A from Bacillus cytotoxicus (strain DSM 22905 / CIP 110041 / 391-98 / NVH 391-98).